Reading from the N-terminus, the 834-residue chain is Periplasmic nitrate reductase (834 aa).

The tat-type signal signal peptide spans 1–32 (MTEPKIDRRQLLKLEAAAIAAAAAGMPTVARA). The 4Fe-4S Mo/W bis-MGD-type domain occupies 44-100 (LKWDKAACRFCGTGCSVMVATKDNRVVATHGDIKAEVNRGLNCVKGYFLSKIMYGHD). 4 residues coordinate [4Fe-4S] cluster: C51, C54, C58, and C86. Mo-bis(molybdopterin guanine dinucleotide) contacts are provided by residues K88, Q155, N180, C184, 217–224 (WGSNMAEM), 248–252 (STFEH), 267–269 (QTD), M378, Q382, N488, 514–515 (SD), K537, D564, and 724–733 (TGRVVEHWHS). Residue W800 participates in substrate binding. The Mo-bis(molybdopterin guanine dinucleotide) site is built by N808 and K825.

Belongs to the prokaryotic molybdopterin-containing oxidoreductase family. NasA/NapA/NarB subfamily. Component of the periplasmic nitrate reductase NapAB complex composed of NapA and NapB. [4Fe-4S] cluster serves as cofactor. It depends on Mo-bis(molybdopterin guanine dinucleotide) as a cofactor. Post-translationally, predicted to be exported by the Tat system. The position of the signal peptide cleavage has not been experimentally proven.

The protein localises to the periplasm. It carries out the reaction 2 Fe(II)-[cytochrome] + nitrate + 2 H(+) = 2 Fe(III)-[cytochrome] + nitrite + H2O. Its function is as follows. Catalytic subunit of the periplasmic nitrate reductase complex NapAB. Receives electrons from NapB and catalyzes the reduction of nitrate to nitrite. This Bradyrhizobium sp. (strain ORS 278) protein is Periplasmic nitrate reductase.